We begin with the raw amino-acid sequence, 267 residues long: Thymidylate synthase (267 aa).

Residue Arg-25 coordinates dUMP. His-55 is a binding site for (6R)-5,10-methylene-5,6,7,8-tetrahydrofolate. DUMP is bound at residue Arg-130–Arg-131. Cys-150 functions as the Nucleophile in the catalytic mechanism. Residues Arg-170 to Asp-173, Asn-181, and His-211 to Tyr-213 contribute to the dUMP site. Asp-173 provides a ligand contact to (6R)-5,10-methylene-5,6,7,8-tetrahydrofolate. Ala-266 contacts (6R)-5,10-methylene-5,6,7,8-tetrahydrofolate.

The protein belongs to the thymidylate synthase family. Bacterial-type ThyA subfamily. Homodimer.

The protein localises to the cytoplasm. The catalysed reaction is dUMP + (6R)-5,10-methylene-5,6,7,8-tetrahydrofolate = 7,8-dihydrofolate + dTMP. Its pathway is pyrimidine metabolism; dTTP biosynthesis. Catalyzes the reductive methylation of 2'-deoxyuridine-5'-monophosphate (dUMP) to 2'-deoxythymidine-5'-monophosphate (dTMP) while utilizing 5,10-methylenetetrahydrofolate (mTHF) as the methyl donor and reductant in the reaction, yielding dihydrofolate (DHF) as a by-product. This enzymatic reaction provides an intracellular de novo source of dTMP, an essential precursor for DNA biosynthesis. The sequence is that of Thymidylate synthase from Corynebacterium efficiens (strain DSM 44549 / YS-314 / AJ 12310 / JCM 11189 / NBRC 100395).